A 501-amino-acid polypeptide reads, in one-letter code: Glycerol kinase (501 aa).

Threonine 17 contacts ADP. ATP contacts are provided by threonine 17, threonine 18, and serine 19. Threonine 17 is a sn-glycerol 3-phosphate binding site. ADP is bound at residue arginine 21. Sn-glycerol 3-phosphate contacts are provided by arginine 87, glutamate 88, tyrosine 139, and aspartate 243. Glycerol-binding residues include arginine 87, glutamate 88, tyrosine 139, aspartate 243, and glutamine 244. Residues threonine 265 and glycine 308 each contribute to the ADP site. ATP-binding residues include threonine 265, glycine 308, glutamine 312, and glycine 409. ADP is bound by residues glycine 409 and asparagine 413.

Belongs to the FGGY kinase family.

It carries out the reaction glycerol + ATP = sn-glycerol 3-phosphate + ADP + H(+). It functions in the pathway polyol metabolism; glycerol degradation via glycerol kinase pathway; sn-glycerol 3-phosphate from glycerol: step 1/1. With respect to regulation, inhibited by fructose 1,6-bisphosphate (FBP). Key enzyme in the regulation of glycerol uptake and metabolism. Catalyzes the phosphorylation of glycerol to yield sn-glycerol 3-phosphate. This is Glycerol kinase from Pseudomonas syringae pv. tomato (strain ATCC BAA-871 / DC3000).